We begin with the raw amino-acid sequence, 500 residues long: L-arabinose isomerase (500 aa).

The Mn(2+) site is built by Glu-306, Glu-333, His-349, and His-448.

The protein belongs to the arabinose isomerase family. It depends on Mn(2+) as a cofactor.

The enzyme catalyses beta-L-arabinopyranose = L-ribulose. Its pathway is carbohydrate degradation; L-arabinose degradation via L-ribulose; D-xylulose 5-phosphate from L-arabinose (bacterial route): step 1/3. Catalyzes the conversion of L-arabinose to L-ribulose. The chain is L-arabinose isomerase from Shewanella sp. (strain MR-4).